A 437-amino-acid polypeptide reads, in one-letter code: Sperm-associated antigen 4 protein (437 aa).

A compositionally biased stretch (low complexity) spans 1–12 (MRRSSRPGSASS). Residues 1–88 (MRRSSRPGSA…KPAPRSHNWQ (88 aa)) are disordered. Polar residues-rich tracts occupy residues 19-31 (NFFSENSSMSITS) and 72-88 (WAGSSQQKPAPRSHNWQ). 2 consecutive transmembrane segments (helical) span residues 135–155 (FLSLLFQGLSVLLSLAGDVLV) and 166–186 (FLFTAVSLLSLFLSAFWLGLL). Residues 197–244 (KEMLTLSEYHERVRSQGQQLQQLQAELDKLHKEVSTVRAANSERVAKL) are a coiled coil. The 161-residue stretch at 265-425 (GASIDLQKTS…YRVRAHGVRT (161 aa)) folds into the SUN domain.

As to quaternary structure, homodimer. Interacts with ODF1. May associate with microtubules. Interacts with SUN3 and SYNE1; suggesting the formation of a spermatogenesis-specific LINC complex; a SUN domain-based heterotrimer with SUN3 may associate with SYNE1. Interacts with SEPT12 and LMNB1; during spermatogenesis. In terms of tissue distribution, predominantly epressed in testis. Expressed in ejaculated spermatozoa (at protein level).

Its subcellular location is the membrane. It is found in the cytoplasm. It localises to the cytoskeleton. The protein resides in the flagellum axoneme. The protein localises to the nucleus envelope. Its subcellular location is the nucleus inner membrane. Its function is as follows. Involved in spermatogenesis. Required for sperm head formation but not required to establish and maintain general polarity of the sperm head. Required for anchoring and organization of the manchette. Required for targeting of SUN3 and probably SYNE1 through a probable SUN1:SYNE3 LINC complex to the nuclear envelope and involved in accurate posterior sperm head localization of the complex. May anchor SUN3 the nuclear envelope. Involved in maintenance of the nuclear envelope integrity. May assist the organization and assembly of outer dense fibers (ODFs), a specific structure of the sperm tail. The sequence is that of Sperm-associated antigen 4 protein (SPAG4) from Homo sapiens (Human).